A 210-amino-acid chain; its full sequence is MTGLFITLEGPEGAGKSTNREYLAAQLRAQGVQVLLTREPGGTPLAERIRELLLAPSDEAMSADTELLLVFAARAQHLAEVIRPALARGEVVLCDRFTDATYAYQGGGRGLSQQRIAVLEEFVQGDLRPDLTLVFDLPVEIGLSRAAARGRLDRFEQEGRAFFDAVRSTYLQRAKADPARYRLVDAAQPLADVQASLDTLLPQLLELRRG.

Residue 10–17 (GPEGAGKS) participates in ATP binding.

Belongs to the thymidylate kinase family.

The catalysed reaction is dTMP + ATP = dTDP + ADP. In terms of biological role, phosphorylation of dTMP to form dTDP in both de novo and salvage pathways of dTTP synthesis. In Pseudomonas savastanoi pv. phaseolicola (strain 1448A / Race 6) (Pseudomonas syringae pv. phaseolicola (strain 1448A / Race 6)), this protein is Thymidylate kinase.